Here is a 335-residue protein sequence, read N- to C-terminus: Glycerol-3-phosphate dehydrogenase [NAD(P)+] (335 aa).

NADPH is bound by residues S12, W13, and K107. Sn-glycerol 3-phosphate contacts are provided by K107, G138, and S140. A142 contributes to the NADPH binding site. 5 residues coordinate sn-glycerol 3-phosphate: K193, D246, S256, R257, and N258. The Proton acceptor role is filled by K193. R257 lines the NADPH pocket. NADPH is bound by residues V281 and E283.

This sequence belongs to the NAD-dependent glycerol-3-phosphate dehydrogenase family.

Its subcellular location is the cytoplasm. It carries out the reaction sn-glycerol 3-phosphate + NAD(+) = dihydroxyacetone phosphate + NADH + H(+). The enzyme catalyses sn-glycerol 3-phosphate + NADP(+) = dihydroxyacetone phosphate + NADPH + H(+). Its pathway is membrane lipid metabolism; glycerophospholipid metabolism. Functionally, catalyzes the reduction of the glycolytic intermediate dihydroxyacetone phosphate (DHAP) to sn-glycerol 3-phosphate (G3P), the key precursor for phospholipid synthesis. This Geobacter metallireducens (strain ATCC 53774 / DSM 7210 / GS-15) protein is Glycerol-3-phosphate dehydrogenase [NAD(P)+].